The chain runs to 318 residues: Nisin-resistance protein (318 aa).

The chain crosses the membrane as a helical span at residues 7-28; that stretch reads ILLGLVAVCALFLGIIYLWGYK.

It is found in the cell membrane. The polypeptide is Nisin-resistance protein (nsr) (Lactococcus lactis subsp. lactis (Streptococcus lactis)).